The following is a 203-amino-acid chain: Imidazole glycerol phosphate synthase subunit HisH (203 aa).

The Glutamine amidotransferase type-1 domain maps to 1–203 (MIGIIDYGMG…KNFGEMIKCL (203 aa)). The Nucleophile role is filled by Cys79. Residues His181 and Glu183 contribute to the active site.

In terms of assembly, heterodimer of HisH and HisF.

It localises to the cytoplasm. It carries out the reaction 5-[(5-phospho-1-deoxy-D-ribulos-1-ylimino)methylamino]-1-(5-phospho-beta-D-ribosyl)imidazole-4-carboxamide + L-glutamine = D-erythro-1-(imidazol-4-yl)glycerol 3-phosphate + 5-amino-1-(5-phospho-beta-D-ribosyl)imidazole-4-carboxamide + L-glutamate + H(+). The enzyme catalyses L-glutamine + H2O = L-glutamate + NH4(+). It participates in amino-acid biosynthesis; L-histidine biosynthesis; L-histidine from 5-phospho-alpha-D-ribose 1-diphosphate: step 5/9. Functionally, IGPS catalyzes the conversion of PRFAR and glutamine to IGP, AICAR and glutamate. The HisH subunit catalyzes the hydrolysis of glutamine to glutamate and ammonia as part of the synthesis of IGP and AICAR. The resulting ammonia molecule is channeled to the active site of HisF. The protein is Imidazole glycerol phosphate synthase subunit HisH of Caldanaerobacter subterraneus subsp. tengcongensis (strain DSM 15242 / JCM 11007 / NBRC 100824 / MB4) (Thermoanaerobacter tengcongensis).